A 276-amino-acid chain; its full sequence is 2-dehydro-3-deoxyphosphooctonate aldolase (276 aa).

This sequence belongs to the KdsA family.

It localises to the cytoplasm. The enzyme catalyses D-arabinose 5-phosphate + phosphoenolpyruvate + H2O = 3-deoxy-alpha-D-manno-2-octulosonate-8-phosphate + phosphate. The protein operates within carbohydrate biosynthesis; 3-deoxy-D-manno-octulosonate biosynthesis; 3-deoxy-D-manno-octulosonate from D-ribulose 5-phosphate: step 2/3. This chain is 2-dehydro-3-deoxyphosphooctonate aldolase, found in Stenotrophomonas maltophilia (strain K279a).